The primary structure comprises 342 residues: Protein BMEI1586 (342 aa).

S90 acts as the Proton acceptor in catalysis. Residues 91–92, D251, and 256–257 contribute to the substrate site; these read GS and GT.

It belongs to the proline racemase family. Homotetramer.

The enzyme catalyses trans-4-hydroxy-L-proline = cis-4-hydroxy-D-proline. In vitro, catalyzes the epimerization of trans-4-hydroxy-L-proline (t4LHyp) to cis-4-hydroxy-D-proline (c4DHyp) and that of trans-3-hydroxy-L-proline (t3LHyp) to cis-3-hydroxy-D-proline (c3DHyp), albeit with very low efficiency. The physiological substrate may be different. Displays neither proline racemase activity nor t3LHyp dehydratase activity. The sequence is that of Protein BMEI1586 from Brucella melitensis biotype 1 (strain ATCC 23456 / CCUG 17765 / NCTC 10094 / 16M).